The following is a 795-amino-acid chain: Phenylalanine--tRNA ligase beta subunit (795 aa).

The 110-residue stretch at 39-148 (AAKFNGVLVG…SDAPVGTDLR (110 aa)) folds into the tRNA-binding domain. Positions 401 to 476 (PKVTEVRLRR…RVYGYNSIPN (76 aa)) constitute a B5 domain. Residues Asp-454, Asp-460, Glu-463, and Glu-464 each coordinate Mg(2+). Residues 701-794 (SKFPSNRRDI…LAEQFNASLR (94 aa)) form the FDX-ACB domain.

This sequence belongs to the phenylalanyl-tRNA synthetase beta subunit family. Type 1 subfamily. Tetramer of two alpha and two beta subunits. Mg(2+) serves as cofactor.

The protein resides in the cytoplasm. The catalysed reaction is tRNA(Phe) + L-phenylalanine + ATP = L-phenylalanyl-tRNA(Phe) + AMP + diphosphate + H(+). This is Phenylalanine--tRNA ligase beta subunit from Pseudoalteromonas translucida (strain TAC 125).